The sequence spans 194 residues: Leucyl/phenylalanyl-tRNA--protein transferase (194 aa).

It belongs to the L/F-transferase family.

Its subcellular location is the cytoplasm. It carries out the reaction N-terminal L-lysyl-[protein] + L-leucyl-tRNA(Leu) = N-terminal L-leucyl-L-lysyl-[protein] + tRNA(Leu) + H(+). The catalysed reaction is N-terminal L-arginyl-[protein] + L-leucyl-tRNA(Leu) = N-terminal L-leucyl-L-arginyl-[protein] + tRNA(Leu) + H(+). The enzyme catalyses L-phenylalanyl-tRNA(Phe) + an N-terminal L-alpha-aminoacyl-[protein] = an N-terminal L-phenylalanyl-L-alpha-aminoacyl-[protein] + tRNA(Phe). Functions in the N-end rule pathway of protein degradation where it conjugates Leu, Phe and, less efficiently, Met from aminoacyl-tRNAs to the N-termini of proteins containing an N-terminal arginine or lysine. In Chlorobium phaeobacteroides (strain DSM 266 / SMG 266 / 2430), this protein is Leucyl/phenylalanyl-tRNA--protein transferase.